Here is a 199-residue protein sequence, read N- to C-terminus: FMN-dependent NADH:quinone oxidoreductase (199 aa).

Ser-10 contributes to the FMN binding site.

The protein belongs to the azoreductase type 1 family. Homodimer. FMN is required as a cofactor.

It catalyses the reaction 2 a quinone + NADH + H(+) = 2 a 1,4-benzosemiquinone + NAD(+). It carries out the reaction N,N-dimethyl-1,4-phenylenediamine + anthranilate + 2 NAD(+) = 2-(4-dimethylaminophenyl)diazenylbenzoate + 2 NADH + 2 H(+). Quinone reductase that provides resistance to thiol-specific stress caused by electrophilic quinones. In terms of biological role, also exhibits azoreductase activity. Catalyzes the reductive cleavage of the azo bond in aromatic azo compounds to the corresponding amines. This is FMN-dependent NADH:quinone oxidoreductase from Cellvibrio japonicus (strain Ueda107) (Pseudomonas fluorescens subsp. cellulosa).